Consider the following 330-residue polypeptide: Peroxidase 42 (330 aa).

The first 23 residues, 1–23 (MGGKGVMMVAILCLWALSATSEA), serve as a signal peptide directing secretion. Intrachain disulfides connect C40-C119, C73-C78, C125-C323, and C204-C231. H71 (proton acceptor) is an active-site residue. Residues D72, V75, D79, and S81 each coordinate Ca(2+). Residue P167 participates in substrate binding. An N-linked (GlcNAc...) asparagine glycan is attached at N170. H197 serves as a coordination point for heme b. Residue S198 participates in Ca(2+) binding. Positions 247, 250, and 255 each coordinate Ca(2+).

The protein belongs to the peroxidase family. Classical plant (class III) peroxidase subfamily. Requires heme b as cofactor. Ca(2+) serves as cofactor. In terms of tissue distribution, constitutively expressed in the whole plant, with the highest expression in roots.

It localises to the secreted. The enzyme catalyses 2 a phenolic donor + H2O2 = 2 a phenolic radical donor + 2 H2O. Removal of H(2)O(2), oxidation of toxic reductants, biosynthesis and degradation of lignin, suberization, auxin catabolism, response to environmental stresses such as wounding, pathogen attack and oxidative stress. These functions might be dependent on each isozyme/isoform in each plant tissue. Functionally, might function as heat shock-like defense protein. The polypeptide is Peroxidase 42 (PER42) (Arabidopsis thaliana (Mouse-ear cress)).